Consider the following 236-residue polypeptide: Phosphoribosylaminoimidazole-succinocarboxamide synthase (236 aa).

This sequence belongs to the SAICAR synthetase family.

The catalysed reaction is 5-amino-1-(5-phospho-D-ribosyl)imidazole-4-carboxylate + L-aspartate + ATP = (2S)-2-[5-amino-1-(5-phospho-beta-D-ribosyl)imidazole-4-carboxamido]succinate + ADP + phosphate + 2 H(+). It participates in purine metabolism; IMP biosynthesis via de novo pathway; 5-amino-1-(5-phospho-D-ribosyl)imidazole-4-carboxamide from 5-amino-1-(5-phospho-D-ribosyl)imidazole-4-carboxylate: step 1/2. The chain is Phosphoribosylaminoimidazole-succinocarboxamide synthase from Campylobacter curvus (strain 525.92).